A 153-amino-acid chain; its full sequence is Movement protein (153 aa).

The segment at S107–R153 is disordered.

Belongs to the luteoviruses movement protein family.

In terms of biological role, transports viral genome to neighboring plant cells directly through plasmosdesmata, without any budding. The movement protein allows efficient cell to cell propagation, by bypassing the host cell wall barrier. The polypeptide is Movement protein (Avena byzantina (Oat)).